The sequence spans 614 residues: Probable pectinesterase/pectinesterase inhibitor 13 (614 aa).

A helical membrane pass occupies residues 25-45 (IIVGTVSLLVVVAAIVGGAFA). The segment at 55-102 (QQQQQQQAKNHNKSGSGNNVVKDSDKKSPSPPTPSQKAPVSAAQSVKP) is disordered. Residues asparagine 66, asparagine 128, asparagine 197, asparagine 243, asparagine 301, asparagine 351, and asparagine 367 are each glycosylated (N-linked (GlcNAc...) asparagine). A pectinesterase inhibitor 13 region spans residues 103–255 (GQGDKIIQTL…QVLTSNSLAL (153 aa)). The segment at 301 to 598 (NATVAKDGSG…YTVGPFLQGD (298 aa)) is pectinesterase 13. Substrate-binding residues include threonine 376 and glutamine 406. The Proton donor; for pectinesterase activity role is filled by aspartate 429. A disulfide bridge connects residues cysteine 443 and cysteine 463. Residue aspartate 450 is the Nucleophile; for pectinesterase activity of the active site. The substrate site is built by arginine 518 and tryptophan 520. Asparagine 522 and asparagine 588 each carry an N-linked (GlcNAc...) asparagine glycan.

It in the N-terminal section; belongs to the PMEI family. This sequence in the C-terminal section; belongs to the pectinesterase family. In terms of tissue distribution, expressed in flower buds.

The protein resides in the membrane. The catalysed reaction is [(1-&gt;4)-alpha-D-galacturonosyl methyl ester](n) + n H2O = [(1-&gt;4)-alpha-D-galacturonosyl](n) + n methanol + n H(+). It functions in the pathway glycan metabolism; pectin degradation; 2-dehydro-3-deoxy-D-gluconate from pectin: step 1/5. In terms of biological role, acts in the modification of cell walls via demethylesterification of cell wall pectin. This chain is Probable pectinesterase/pectinesterase inhibitor 13 (PME13), found in Arabidopsis thaliana (Mouse-ear cress).